A 412-amino-acid polypeptide reads, in one-letter code: Docking protein 2 (412 aa).

A PH domain is found at 4–114 (GAVKQGFLYL…WVQAICLLAF (111 aa)). The region spanning 147–252 (PHKEFAVTMR…SAQKNAAPAT (106 aa)) is the IRS-type PTB domain. Residues 246-296 (KNAAPATPQPQPATIPASLPRPDSPYSRPHDSLPPPSPTTPVPAPRPRGQE) are disordered. A Phosphotyrosine modification is found at Y271. Positions 277–291 (SLPPPSPTTPVPAPR) are enriched in pro residues. Phosphotyrosine occurs at positions 299 and 345. The segment at 359-412 (SPQEPRGEAWRRQATADRDPAGLQHVQPAGQDFSASGWQPGTEYDNVVLKKGPK) is disordered. Residues 361-378 (QEPRGEAWRRQATADRDP) show a composition bias toward basic and acidic residues.

Belongs to the DOK family. Type A subfamily. As to quaternary structure, interacts with phosphorylated RASGAP and EGFR. Interacts with RET and NCK. Interacts (via PH domain) with TEK/TIE2 (tyrosine phosphorylated). In terms of assembly, (Microbial infection) Interacts with Herpes simplex virus 1 (HHV-1) protein UL46; this interaction induces DOK2 phosphorylation and subsequent degradation. In terms of processing, on immunoreceptor stimulation, phosphorylated on C-terminal tyrosine residues. Phosphorylation on Tyr-345 is required for binding to the SH2 domain of NCK. Phosphorylation on both Tyr-271 and Tyr-299 is required for interaction with RASGAP. Phosphorylated on tyrosine residues by TEK/TIE2. In terms of tissue distribution, highly expressed in peripheral blood leukocytes, lymph nodes and spleen. Lower expression in thymus, bone marrow and fetal liver.

DOK proteins are enzymatically inert adaptor or scaffolding proteins. They provide a docking platform for the assembly of multimolecular signaling complexes. DOK2 may modulate the cellular proliferation induced by IL-4, as well as IL-2 and IL-3. May be involved in modulating Bcr-Abl signaling. Attenuates EGF-stimulated MAP kinase activation. This chain is Docking protein 2 (DOK2), found in Homo sapiens (Human).